A 360-amino-acid chain; its full sequence is Phospho-N-acetylmuramoyl-pentapeptide-transferase (360 aa).

Transmembrane regions (helical) follow at residues 27-47 (GALFTAGFFVFWFGPWIISLL), 70-90 (GTPTMGGLMILAGAVVSILLW), 98-118 (VWVTLAVTLGFGAIGFYDDYL), 134-154 (LLLEFAIAGAACLLISIYSPA), 168-188 (ALLNLGWFWVPFAAFVIVGAG), 199-219 (GLAIVPVMIACGTFGVIAYLV), 239-259 (LAVVCGAVIGAGLGFLWFNAP), 263-283 (IFMGDTGSLALGGLLGAIAVA), 288-308 (IVLAIVGGLFVLEIMSVIIQV), and 337-357 (QVVIRFWIIAVILALVGLATL).

This sequence belongs to the glycosyltransferase 4 family. MraY subfamily. Mg(2+) is required as a cofactor.

Its subcellular location is the cell inner membrane. The enzyme catalyses UDP-N-acetyl-alpha-D-muramoyl-L-alanyl-gamma-D-glutamyl-meso-2,6-diaminopimeloyl-D-alanyl-D-alanine + di-trans,octa-cis-undecaprenyl phosphate = di-trans,octa-cis-undecaprenyl diphospho-N-acetyl-alpha-D-muramoyl-L-alanyl-D-glutamyl-meso-2,6-diaminopimeloyl-D-alanyl-D-alanine + UMP. The protein operates within cell wall biogenesis; peptidoglycan biosynthesis. Functionally, catalyzes the initial step of the lipid cycle reactions in the biosynthesis of the cell wall peptidoglycan: transfers peptidoglycan precursor phospho-MurNAc-pentapeptide from UDP-MurNAc-pentapeptide onto the lipid carrier undecaprenyl phosphate, yielding undecaprenyl-pyrophosphoryl-MurNAc-pentapeptide, known as lipid I. The polypeptide is Phospho-N-acetylmuramoyl-pentapeptide-transferase (Methylorubrum populi (strain ATCC BAA-705 / NCIMB 13946 / BJ001) (Methylobacterium populi)).